Reading from the N-terminus, the 127-residue chain is Small ribosomal subunit protein uS13 (127 aa).

Residues 95–118 show a composition bias toward basic residues; that stretch reads GLPVRGQRTHTNARTRKGPKKGLV. Residues 95–127 are disordered; sequence GLPVRGQRTHTNARTRKGPKKGLVRKAAAPAPK.

Belongs to the universal ribosomal protein uS13 family. Part of the 30S ribosomal subunit. Forms a loose heterodimer with protein S19. Forms two bridges to the 50S subunit in the 70S ribosome.

Located at the top of the head of the 30S subunit, it contacts several helices of the 16S rRNA. In the 70S ribosome it contacts the 23S rRNA (bridge B1a) and protein L5 of the 50S subunit (bridge B1b), connecting the 2 subunits; these bridges are implicated in subunit movement. Contacts the tRNAs in the A and P-sites. In Anaeromyxobacter sp. (strain Fw109-5), this protein is Small ribosomal subunit protein uS13.